We begin with the raw amino-acid sequence, 289 residues long: Protease HtpX homolog (289 aa).

2 helical membrane-spanning segments follow: residues leucine 5–isoleucine 27 and alanine 40–asparagine 60. Histidine 133 contributes to the Zn(2+) binding site. The active site involves glutamate 134. A Zn(2+)-binding site is contributed by histidine 137. The next 2 membrane-spanning stretches (helical) occupy residues threonine 143–alanine 163 and isoleucine 181–alanine 201. Residue glutamate 207 participates in Zn(2+) binding.

The protein belongs to the peptidase M48B family. Zn(2+) serves as cofactor.

Its subcellular location is the cell membrane. The protein is Protease HtpX homolog of Pyrococcus furiosus (strain ATCC 43587 / DSM 3638 / JCM 8422 / Vc1).